We begin with the raw amino-acid sequence, 182 residues long: ATP synthase subunit delta (182 aa).

The protein belongs to the ATPase delta chain family. As to quaternary structure, F-type ATPases have 2 components, F(1) - the catalytic core - and F(0) - the membrane proton channel. F(1) has five subunits: alpha(3), beta(3), gamma(1), delta(1), epsilon(1). F(0) has three main subunits: a(1), b(2) and c(10-14). The alpha and beta chains form an alternating ring which encloses part of the gamma chain. F(1) is attached to F(0) by a central stalk formed by the gamma and epsilon chains, while a peripheral stalk is formed by the delta and b chains.

The protein resides in the cell inner membrane. In terms of biological role, f(1)F(0) ATP synthase produces ATP from ADP in the presence of a proton or sodium gradient. F-type ATPases consist of two structural domains, F(1) containing the extramembraneous catalytic core and F(0) containing the membrane proton channel, linked together by a central stalk and a peripheral stalk. During catalysis, ATP synthesis in the catalytic domain of F(1) is coupled via a rotary mechanism of the central stalk subunits to proton translocation. Functionally, this protein is part of the stalk that links CF(0) to CF(1). It either transmits conformational changes from CF(0) to CF(1) or is implicated in proton conduction. The chain is ATP synthase subunit delta from Histophilus somni (strain 129Pt) (Haemophilus somnus).